Here is a 339-residue protein sequence, read N- to C-terminus: Phosphoribosylformylglycinamidine cyclo-ligase (339 aa).

The protein belongs to the AIR synthase family.

It is found in the cytoplasm. It carries out the reaction 2-formamido-N(1)-(5-O-phospho-beta-D-ribosyl)acetamidine + ATP = 5-amino-1-(5-phospho-beta-D-ribosyl)imidazole + ADP + phosphate + H(+). It participates in purine metabolism; IMP biosynthesis via de novo pathway; 5-amino-1-(5-phospho-D-ribosyl)imidazole from N(2)-formyl-N(1)-(5-phospho-D-ribosyl)glycinamide: step 2/2. The chain is Phosphoribosylformylglycinamidine cyclo-ligase from Streptococcus thermophilus (strain ATCC BAA-250 / LMG 18311).